The chain runs to 426 residues: 3-phosphoshikimate 1-carboxyvinyltransferase (426 aa).

Residues lysine 22, serine 23, and arginine 27 each coordinate 3-phosphoshikimate. Lysine 22 lines the phosphoenolpyruvate pocket. Residues glycine 96 and arginine 124 each coordinate phosphoenolpyruvate. Residues serine 170, serine 171, glutamine 172, serine 198, aspartate 314, asparagine 337, and lysine 341 each coordinate 3-phosphoshikimate. Glutamine 172 contacts phosphoenolpyruvate. Aspartate 314 acts as the Proton acceptor in catalysis. Residues arginine 345, arginine 387, and lysine 412 each contribute to the phosphoenolpyruvate site.

It belongs to the EPSP synthase family. As to quaternary structure, monomer.

Its subcellular location is the cytoplasm. The enzyme catalyses 3-phosphoshikimate + phosphoenolpyruvate = 5-O-(1-carboxyvinyl)-3-phosphoshikimate + phosphate. It functions in the pathway metabolic intermediate biosynthesis; chorismate biosynthesis; chorismate from D-erythrose 4-phosphate and phosphoenolpyruvate: step 6/7. In terms of biological role, catalyzes the transfer of the enolpyruvyl moiety of phosphoenolpyruvate (PEP) to the 5-hydroxyl of shikimate-3-phosphate (S3P) to produce enolpyruvyl shikimate-3-phosphate and inorganic phosphate. This is 3-phosphoshikimate 1-carboxyvinyltransferase from Shewanella baltica (strain OS185).